Reading from the N-terminus, the 166-residue chain is Probable calcium-binding protein CML17 (166 aa).

4 consecutive EF-hand domains span residues 12 to 47, 48 to 83, 91 to 126, and 127 to 162; these read EQIN…LGVK, PSPD…ELLS, YTEE…LGHA, and LTVA…AAFD. Positions 25, 27, 29, 31, and 36 each coordinate Ca(2+). Ca(2+) contacts are provided by aspartate 104, aspartate 106, asparagine 108, glutamate 115, aspartate 140, aspartate 142, aspartate 144, arginine 146, and glutamate 151.

Its function is as follows. Potential calcium sensor. The protein is Probable calcium-binding protein CML17 (CML17) of Arabidopsis thaliana (Mouse-ear cress).